A 327-amino-acid polypeptide reads, in one-letter code: Aspartate--ammonia ligase (327 aa).

Belongs to the class-II aminoacyl-tRNA synthetase family. AsnA subfamily.

It localises to the cytoplasm. The catalysed reaction is L-aspartate + NH4(+) + ATP = L-asparagine + AMP + diphosphate + H(+). Its pathway is amino-acid biosynthesis; L-asparagine biosynthesis; L-asparagine from L-aspartate (ammonia route): step 1/1. The chain is Aspartate--ammonia ligase from Bacillus cereus (strain AH187).